The chain runs to 290 residues: Glycine--tRNA ligase alpha subunit (290 aa).

The protein belongs to the class-II aminoacyl-tRNA synthetase family. As to quaternary structure, tetramer of two alpha and two beta subunits.

Its subcellular location is the cytoplasm. The catalysed reaction is tRNA(Gly) + glycine + ATP = glycyl-tRNA(Gly) + AMP + diphosphate. The chain is Glycine--tRNA ligase alpha subunit from Prochlorococcus marinus (strain NATL2A).